Reading from the N-terminus, the 800-residue chain is Nucleolar complex protein 3 homolog (800 aa).

Disordered stretches follow at residues 27-93 (KLKN…DMMD) and 160-187 (GIIP…RELE). A compositionally biased stretch (basic residues) spans 40–51 (KKYRKEQRKLRQ). Positions 66 to 78 (NPKEKRPGKRIER) are enriched in basic and acidic residues. Residues 79–93 (EEEEEEEALPLDMMD) show a composition bias toward acidic residues. Positions 160-174 (GIIPQTREKPVTDSN) are enriched in basic and acidic residues. Residues 175-187 (KDEEDQEEERELE) are compositionally biased toward acidic residues. Lys333 is covalently cross-linked (Glycyl lysine isopeptide (Lys-Gly) (interchain with G-Cter in SUMO2)). Residues 451-490 (KEKRKSLSRMQRKWKKAEEKLERELREAEASESTEKKLKL) are a coiled coil. Position 787 is a phosphoserine (Ser787).

This sequence belongs to the CBF/MAK21 family. Expressed in colon, heart, kidney, liver, lung, placenta, skeletal muscle, small intestine, spleen and thymus.

The protein resides in the nucleus. It is found in the nucleolus. Its subcellular location is the nucleus speckle. May be required for adipogenesis. This chain is Nucleolar complex protein 3 homolog (NOC3L), found in Homo sapiens (Human).